We begin with the raw amino-acid sequence, 478 residues long: Cytochrome c-552 (478 aa).

A signal peptide spans 1-27; it reads MKKQWTRRSAAAIAMVTTLLLSSHSFA. A heme c-binding site is contributed by His91. 3 residues coordinate heme: Cys119, Cys122, and Lys123. Heme c-binding residues include Cys157, Cys160, His161, Cys206, Cys209, and His210. Ca(2+) contacts are provided by Glu212, Tyr213, Lys258, and Gln260. Tyr213 is a substrate binding site. His261 is a substrate binding site. Heme c is bound by residues His272, Cys279, Cys282, His283, His298, Cys311, Cys314, His315, and His390.

This sequence belongs to the cytochrome c-552 family. The cofactor is Ca(2+). Requires heme c as cofactor.

The protein localises to the periplasm. It catalyses the reaction 6 Fe(III)-[cytochrome c] + NH4(+) + 2 H2O = 6 Fe(II)-[cytochrome c] + nitrite + 8 H(+). It participates in nitrogen metabolism; nitrate reduction (assimilation). In terms of biological role, catalyzes the reduction of nitrite to ammonia, consuming six electrons in the process. The protein is Cytochrome c-552 of Aliivibrio salmonicida (strain LFI1238) (Vibrio salmonicida (strain LFI1238)).